The sequence spans 605 residues: Threonine--tRNA ligase (605 aa).

A catalytic region spans residues 195-497 (DHRKVGKELG…LIEEYAGDFP (303 aa)). Residues cysteine 294, histidine 345, and histidine 474 each coordinate Zn(2+).

Belongs to the class-II aminoacyl-tRNA synthetase family. In terms of assembly, homodimer. It depends on Zn(2+) as a cofactor.

The protein localises to the cytoplasm. The enzyme catalyses tRNA(Thr) + L-threonine + ATP = L-threonyl-tRNA(Thr) + AMP + diphosphate + H(+). Catalyzes the attachment of threonine to tRNA(Thr) in a two-step reaction: L-threonine is first activated by ATP to form Thr-AMP and then transferred to the acceptor end of tRNA(Thr). Also edits incorrectly charged L-seryl-tRNA(Thr). The protein is Threonine--tRNA ligase of Thermosynechococcus vestitus (strain NIES-2133 / IAM M-273 / BP-1).